The primary structure comprises 542 residues: Chaperonin GroEL (542 aa).

Residues 29-32 (TLGP), 86-90 (DGTTT), Gly413, 478-480 (DAL), and Asp494 contribute to the ATP site.

Belongs to the chaperonin (HSP60) family. Forms a cylinder of 14 subunits composed of two heptameric rings stacked back-to-back. Interacts with the co-chaperonin GroES.

The protein localises to the cytoplasm. It catalyses the reaction ATP + H2O + a folded polypeptide = ADP + phosphate + an unfolded polypeptide.. In terms of biological role, together with its co-chaperonin GroES, plays an essential role in assisting protein folding. The GroEL-GroES system forms a nano-cage that allows encapsulation of the non-native substrate proteins and provides a physical environment optimized to promote and accelerate protein folding. The sequence is that of Chaperonin GroEL from Clostridioides difficile (strain 630) (Peptoclostridium difficile).